The following is a 332-amino-acid chain: Nucleoid-associated protein VIBHAR_03026 (332 aa).

It belongs to the YejK family.

It is found in the cytoplasm. The protein localises to the nucleoid. The protein is Nucleoid-associated protein VIBHAR_03026 of Vibrio campbellii (strain ATCC BAA-1116).